The primary structure comprises 493 residues: Aspartate-semialdehyde dehydrogenase (Non-phosphorylating) (493 aa).

Residues tryptophan 160 to asparagine 161, lysine 184 to histidine 187, and glycine 237 to serine 238 contribute to the NADP(+) site. Glutamate 259 (proton acceptor) is an active-site residue. Position 260 (leucine 260) interacts with NADP(+). The Nucleophile role is filled by cysteine 293. Glutamate 390 is an NADP(+) binding site.

The protein belongs to the aldehyde dehydrogenase family.

The protein resides in the cytoplasm. The enzyme catalyses L-aspartate 4-semialdehyde + NAD(+) + H2O = L-aspartate + NADH + 2 H(+). Functionally, involved in the degradation of ectoine, which allows H.elongata to utilize ectoine as both a carbon and a nitrogen source for growth. Probably catalyzes the NAD(+)-dependent oxidation of L-aspartate-semialdehyde to L-aspartate. This Halomonas elongata (strain ATCC 33173 / DSM 2581 / NBRC 15536 / NCIMB 2198 / 1H9) protein is Aspartate-semialdehyde dehydrogenase (Non-phosphorylating).